The chain runs to 119 residues: MTQTGKSNIEAKAFARYITMSPYKVRRIVDQIRGRSYEEALMILQFMPYRACNPVLKVLYSAAANAKHNLGLNKSELSISEVKVDQGPVMKRFQPRAQGRGYPIRKPTCHISLTVKGLK.

This sequence belongs to the universal ribosomal protein uL22 family. As to quaternary structure, part of the 50S ribosomal subunit.

It localises to the plastid. The protein resides in the chloroplast. Functionally, this protein binds specifically to 23S rRNA. Its function is as follows. The globular domain of the protein is located near the polypeptide exit tunnel on the outside of the subunit, while an extended beta-hairpin is found that lines the wall of the exit tunnel in the center of the 70S ribosome. The chain is Large ribosomal subunit protein uL22c (rpl22) from Chlorokybus atmophyticus (Soil alga).